Reading from the N-terminus, the 121-residue chain is Protein YxiB (121 aa).

The sequence is that of Protein YxiB (yxiB) from Bacillus subtilis (strain 168).